The following is a 308-amino-acid chain: Ribonuclease Z (308 aa).

7 residues coordinate Zn(2+): histidine 61, histidine 63, aspartate 65, histidine 66, histidine 139, aspartate 210, and histidine 268. Aspartate 65 acts as the Proton acceptor in catalysis.

It belongs to the RNase Z family. As to quaternary structure, homodimer. Zn(2+) is required as a cofactor.

It carries out the reaction Endonucleolytic cleavage of RNA, removing extra 3' nucleotides from tRNA precursor, generating 3' termini of tRNAs. A 3'-hydroxy group is left at the tRNA terminus and a 5'-phosphoryl group is left at the trailer molecule.. Zinc phosphodiesterase, which displays some tRNA 3'-processing endonuclease activity. Probably involved in tRNA maturation, by removing a 3'-trailer from precursor tRNA. This Natronomonas pharaonis (strain ATCC 35678 / DSM 2160 / CIP 103997 / JCM 8858 / NBRC 14720 / NCIMB 2260 / Gabara) (Halobacterium pharaonis) protein is Ribonuclease Z.